We begin with the raw amino-acid sequence, 125 residues long: Small ribosomal subunit protein bS6 (125 aa).

The protein belongs to the bacterial ribosomal protein bS6 family.

In terms of biological role, binds together with bS18 to 16S ribosomal RNA. The sequence is that of Small ribosomal subunit protein bS6 from Baumannia cicadellinicola subsp. Homalodisca coagulata.